Reading from the N-terminus, the 479-residue chain is Glutamate--tRNA ligase (479 aa).

The 'HIGH' region signature appears at 21–31; that stretch reads PSPTGYLHVGG. A 'KMSKS' region motif is present at residues 248–252; it reads KLSKR. Lys-251 contacts ATP.

This sequence belongs to the class-I aminoacyl-tRNA synthetase family. Glutamate--tRNA ligase type 1 subfamily. As to quaternary structure, monomer.

It is found in the cytoplasm. The enzyme catalyses tRNA(Glu) + L-glutamate + ATP = L-glutamyl-tRNA(Glu) + AMP + diphosphate. Catalyzes the attachment of glutamate to tRNA(Glu) in a two-step reaction: glutamate is first activated by ATP to form Glu-AMP and then transferred to the acceptor end of tRNA(Glu). The polypeptide is Glutamate--tRNA ligase (Actinobacillus pleuropneumoniae serotype 5b (strain L20)).